The sequence spans 286 residues: Aminoglycoside N(3)-acetyltransferase III (286 aa).

It belongs to the antibiotic N-acetyltransferase family.

The catalysed reaction is a 2-deoxystreptamine antibiotic + acetyl-CoA = an N(3)-acetyl-2-deoxystreptamine antibiotic + CoA + H(+). Resistance to antibiotics containing the 2-deoxy-streptamine ring including gentamicin, kanamycin, tobramycin, neomycin and apramycin. This is Aminoglycoside N(3)-acetyltransferase III (aacC2) from Acinetobacter baumannii.